The following is a 102-amino-acid chain: NADH-quinone oxidoreductase subunit K (102 aa).

3 helical membrane passes run 6–26 (LIGM…GVLA), 30–50 (ILFQ…AFVA), and 63–83 (MLIL…ALLL).

The protein belongs to the complex I subunit 4L family. As to quaternary structure, NDH-1 is composed of 14 different subunits. Subunits NuoA, H, J, K, L, M, N constitute the membrane sector of the complex.

It localises to the cell inner membrane. The catalysed reaction is a quinone + NADH + 5 H(+)(in) = a quinol + NAD(+) + 4 H(+)(out). NDH-1 shuttles electrons from NADH, via FMN and iron-sulfur (Fe-S) centers, to quinones in the respiratory chain. The immediate electron acceptor for the enzyme in this species is believed to be ubiquinone. Couples the redox reaction to proton translocation (for every two electrons transferred, four hydrogen ions are translocated across the cytoplasmic membrane), and thus conserves the redox energy in a proton gradient. This is NADH-quinone oxidoreductase subunit K from Rhodopseudomonas palustris (strain HaA2).